The following is a 264-amino-acid chain: Thymidylate synthase (264 aa).

Arginine 21 provides a ligand contact to dUMP. Histidine 51 provides a ligand contact to (6R)-5,10-methylene-5,6,7,8-tetrahydrofolate. 126–127 contacts dUMP; sequence RR. Cysteine 146 serves as the catalytic Nucleophile. Residues 166–169, asparagine 177, and 207–209 contribute to the dUMP site; these read RSAD and HLY. Aspartate 169 is a (6R)-5,10-methylene-5,6,7,8-tetrahydrofolate binding site. Position 263 (alanine 263) interacts with (6R)-5,10-methylene-5,6,7,8-tetrahydrofolate.

Belongs to the thymidylate synthase family. Bacterial-type ThyA subfamily. As to quaternary structure, homodimer.

Its subcellular location is the cytoplasm. It catalyses the reaction dUMP + (6R)-5,10-methylene-5,6,7,8-tetrahydrofolate = 7,8-dihydrofolate + dTMP. Its pathway is pyrimidine metabolism; dTTP biosynthesis. In terms of biological role, catalyzes the reductive methylation of 2'-deoxyuridine-5'-monophosphate (dUMP) to 2'-deoxythymidine-5'-monophosphate (dTMP) while utilizing 5,10-methylenetetrahydrofolate (mTHF) as the methyl donor and reductant in the reaction, yielding dihydrofolate (DHF) as a by-product. This enzymatic reaction provides an intracellular de novo source of dTMP, an essential precursor for DNA biosynthesis. This Methylobacterium nodulans (strain LMG 21967 / CNCM I-2342 / ORS 2060) protein is Thymidylate synthase.